A 128-amino-acid polypeptide reads, in one-letter code: Protein BEX2 (128 aa).

The tract at residues 1 to 44 (MMPKEEQVLKNLTMENANEENEKKDEKEQDANKGEPLALSLGAG) is disordered. Residues 20-33 (ENEKKDEKEQDANK) show a composition bias toward basic and acidic residues. An Omega-N-methylarginine modification is found at R50. Residues 103–128 (QLSHSLRAVSTDPPHHEHNDEFCLMP) are disordered. Positions 115 to 128 (PPHHEHNDEFCLMP) are enriched in basic and acidic residues. The segment at 117 to 121 (HHEHN) is his cluster. C125 contacts Zn(2+).

Belongs to the BEX family. As to quaternary structure, interacts with LMO2, possibly leading to regulate the transcriptional activity of a DNA-binding complex containing LMO2. Interacts with OMP.

The protein localises to the cytoplasm. It localises to the nucleus. Its function is as follows. Regulator of mitochondrial apoptosis and G1 cell cycle. Regulates the level of PP2A regulatory subunit B and PP2A phosphatase activity. In absence of reductive stress, acts as a pseudosubstrate for the CRL2(FEM1B) complex: associates with FEM1B via zinc, thereby preventing association between FEM1B and its substrates. This Bos taurus (Bovine) protein is Protein BEX2 (BEX2).